The primary structure comprises 511 residues: 2-isopropylmalate synthase (511 aa).

The Pyruvate carboxyltransferase domain occupies 4-266 (IRIFDTTLRD…ETGIDLSQLY (263 aa)). Residues aspartate 13, histidine 201, histidine 203, and asparagine 237 each coordinate Mn(2+). The interval 391–511 (VLEKIRVVSG…IAANARAQKN (121 aa)) is regulatory domain.

Belongs to the alpha-IPM synthase/homocitrate synthase family. LeuA type 1 subfamily. As to quaternary structure, homodimer. The cofactor is Mn(2+).

The protein localises to the cytoplasm. It carries out the reaction 3-methyl-2-oxobutanoate + acetyl-CoA + H2O = (2S)-2-isopropylmalate + CoA + H(+). Its pathway is amino-acid biosynthesis; L-leucine biosynthesis; L-leucine from 3-methyl-2-oxobutanoate: step 1/4. In terms of biological role, catalyzes the condensation of the acetyl group of acetyl-CoA with 3-methyl-2-oxobutanoate (2-ketoisovalerate) to form 3-carboxy-3-hydroxy-4-methylpentanoate (2-isopropylmalate). The sequence is that of 2-isopropylmalate synthase from Acetivibrio thermocellus (strain ATCC 27405 / DSM 1237 / JCM 9322 / NBRC 103400 / NCIMB 10682 / NRRL B-4536 / VPI 7372) (Clostridium thermocellum).